The following is a 42-amino-acid chain: Protein Tat (42 aa).

The segment at 1–24 is interaction with human CREBBP; that stretch reads MEPVDPNLEPWNHPGSQPKTACNQ. Residues 22-37 form a cysteine-rich region; it reads CNQCYCKKCSYHCLVC. The residue at position 28 (Lys28) is an N6-acetyllysine; by host PCAF.

The protein belongs to the lentiviruses Tat family. Interacts with host CCNT1. Associates with the P-TEFb complex composed at least of Tat, P-TEFb (CDK9 and CCNT1), TAR RNA, RNA Pol II. Recruits the HATs CREBBP, TAF1/TFIID, EP300, PCAF and GCN5L2. Interacts with host KAT5/Tip60; this interaction targets the latter to degradation. Interacts with the host deacetylase SIRT1. Interacts with host capping enzyme RNGTT; this interaction stimulates RNGTT. Binds to host KDR, and to the host integrins ITGAV/ITGB3 and ITGA5/ITGB1. Interacts with host KPNB1/importin beta-1 without previous binding to KPNA1/importin alpha-1. Interacts with EIF2AK2. Interacts with host nucleosome assembly protein NAP1L1; this interaction may be required for the transport of Tat within the nucleus, since the two proteins interact at the nuclear rim. Interacts with host C1QBP/SF2P32; this interaction involves lysine-acetylated Tat. Interacts with the host chemokine receptors CCR2, CCR3 and CXCR4. Interacts with host DPP4/CD26; this interaction may trigger an anti-proliferative effect. Interacts with host LDLR. Interacts with the host extracellular matrix metalloproteinase MMP1. Interacts with host PRMT6; this interaction mediates Tat's methylation. Interacts with, and is ubiquitinated by MDM2/Hdm2. Interacts with host PSMC3 and HTATIP2. Interacts with STAB1; this interaction may overcome SATB1-mediated repression of IL2 and IL2RA (interleukin) in T cells by binding to the same domain than HDAC1. Interacts (when acetylated) with human CDK13, thereby increasing HIV-1 mRNA splicing and promoting the production of the doubly spliced HIV-1 protein Nef. Interacts with host TBP; this interaction modulates the activity of transcriptional pre-initiation complex. Interacts with host RELA. Interacts with host PLSCR1; this interaction negatively regulates Tat transactivation activity by altering its subcellular distribution. Phosphorylated by EIF2AK2 on serine and threonine residues adjacent to the basic region important for TAR RNA binding and function. Phosphorylation of Tat by EIF2AK2 is dependent on the prior activation of EIF2AK2 by dsRNA. In terms of processing, asymmetrical arginine methylation by host PRMT6 seems to diminish the transactivation capacity of Tat and affects the interaction with host CCNT1. Post-translationally, polyubiquitination by host MDM2 does not target Tat to degradation, but activates its transactivation function and fosters interaction with CCNT1 and TAR RNA.

The protein resides in the host nucleus. Its subcellular location is the host nucleolus. It is found in the host cytoplasm. It localises to the secreted. In terms of biological role, transcriptional activator that increases RNA Pol II processivity, thereby increasing the level of full-length viral transcripts. Recognizes a hairpin structure at the 5'-LTR of the nascent viral mRNAs referred to as the transactivation responsive RNA element (TAR) and recruits the cyclin T1-CDK9 complex (P-TEFb complex) that will in turn hyperphosphorylate the RNA polymerase II to allow efficient elongation. The CDK9 component of P-TEFb and other Tat-activated kinases hyperphosphorylate the C-terminus of RNA Pol II that becomes stabilized and much more processive. Other factors such as HTATSF1/Tat-SF1, SUPT5H/SPT5, and HTATIP2 are also important for Tat's function. Besides its effect on RNA Pol II processivity, Tat induces chromatin remodeling of proviral genes by recruiting the histone acetyltransferases (HATs) CREBBP, EP300 and PCAF to the chromatin. This also contributes to the increase in proviral transcription rate, especially when the provirus integrates in transcriptionally silent region of the host genome. To ensure maximal activation of the LTR, Tat mediates nuclear translocation of NF-kappa-B by interacting with host RELA. Through its interaction with host TBP, Tat may also modulate transcription initiation. Tat can reactivate a latently infected cell by penetrating in it and transactivating its LTR promoter. In the cytoplasm, Tat is thought to act as a translational activator of HIV-1 mRNAs. Its function is as follows. Extracellular circulating Tat can be endocytosed by surrounding uninfected cells via the binding to several surface receptors such as CD26, CXCR4, heparan sulfate proteoglycans (HSPG) or LDLR. Neurons are rarely infected, but they internalize Tat via their LDLR. Through its interaction with nuclear HATs, Tat is potentially able to control the acetylation-dependent cellular gene expression. Modulates the expression of many cellular genes involved in cell survival, proliferation or in coding for cytokines or cytokine receptors. Tat plays a role in T-cell and neurons apoptosis. Tat induced neurotoxicity and apoptosis probably contribute to neuroAIDS. Circulating Tat also acts as a chemokine-like and/or growth factor-like molecule that binds to specific receptors on the surface of the cells, affecting many cellular pathways. In the vascular system, Tat binds to ITGAV/ITGB3 and ITGA5/ITGB1 integrins dimers at the surface of endothelial cells and competes with bFGF for heparin-binding sites, leading to an excess of soluble bFGF. This chain is Protein Tat, found in Human immunodeficiency virus type 1 group M subtype C (isolate ETH2220) (HIV-1).